The chain runs to 122 residues: Large ribosomal subunit protein bL12 (122 aa).

Belongs to the bacterial ribosomal protein bL12 family. In terms of assembly, homodimer. Part of the ribosomal stalk of the 50S ribosomal subunit. Forms a multimeric L10(L12)X complex, where L10 forms an elongated spine to which 2 to 4 L12 dimers bind in a sequential fashion. Binds GTP-bound translation factors.

Its function is as follows. Forms part of the ribosomal stalk which helps the ribosome interact with GTP-bound translation factors. Is thus essential for accurate translation. In Actinobacillus pleuropneumoniae serotype 5b (strain L20), this protein is Large ribosomal subunit protein bL12.